Consider the following 151-residue polypeptide: Group 10 secretory phospholipase A2 (151 aa).

The N-terminal stretch at 1-17 (MLLLLLLLLLGPGPGFS) is a signal peptide. A propeptide spanning residues 18–28 (EATRRSHVYKR) is cleaved from the precursor. Cystine bridges form between Cys-39/Cys-97, Cys-53/Cys-143, Cys-55/Cys-71, Cys-70/Cys-125, Cys-76/Cys-150, Cys-77/Cys-118, Cys-86/Cys-111, and Cys-104/Cys-116. The Ca(2+) site is built by Tyr-54, Gly-56, and Gly-58. His-74 is an active-site residue. Asp-75 is a binding site for Ca(2+). Residue Asp-119 is part of the active site.

It belongs to the phospholipase A2 family. As to quaternary structure, interacts with PLA2R1; this interaction mediates PLA2G10 clearance and inactivation. Ca(2+) serves as cofactor. As to expression, expressed at high levels in testis and the gastrointestinal tract including stomach and colon. Expressed at lower levels in other tissues including small intestine, uterus, oviduct, lung, thymus, spleen and brain. Expressed in Paneth-like secretory epithelial cells of the colon. Expressed in gastric and ileac epithelial cells and in glandular epithelium of intestinal mucosa (at protein level). Expressed in late spermatogenic cells, spermatocytes and spermatids, but not spermatogonia in seminiferous tubules (at protein level). Expressed mainly in the apical side of endometrial epithelial cells and in the interstitium beneath the epithelium of uterus (at protein level). Expressed in resident spleen macrophages (at protein level). Expressed at outermost layer of hair follicles. Expressed in dorsal root ganglia in both NEFH-positive A-fibers and PRPH-positive C-fibers (at protein level).

It localises to the secreted. The protein localises to the lysosome. It is found in the cytoplasmic vesicle. The protein resides in the secretory vesicle. Its subcellular location is the acrosome. The catalysed reaction is a 1,2-diacyl-sn-glycero-3-phosphocholine + H2O = a 1-acyl-sn-glycero-3-phosphocholine + a fatty acid + H(+). It carries out the reaction 1-hexadecanoyl-2-(9Z-octadecenoyl)-sn-glycero-3-phosphocholine + H2O = 1-hexadecanoyl-sn-glycero-3-phosphocholine + (9Z)-octadecenoate + H(+). The enzyme catalyses 1-octadecanoyl-2-(5Z,8Z,11Z,14Z-eicosatetraenoyl)-sn-glycero-3-phosphocholine + H2O = 1-octadecanoyl-sn-glycero-3-phosphocholine + (5Z,8Z,11Z,14Z)-eicosatetraenoate + H(+). It catalyses the reaction 1,2-dihexadecanoyl-sn-glycero-3-phosphocholine + H2O = 1-hexadecanoyl-sn-glycero-3-phosphocholine + hexadecanoate + H(+). The catalysed reaction is 1-hexadecanoyl-2-(9Z-octadecenoyl)-sn-glycero-3-phosphoglycerol + H2O = 1-hexadecanoyl-sn-glycero-3-phosphoglycerol + (9Z)-octadecenoate + H(+). It carries out the reaction 1,2-dihexadecanoyl-sn-glycero-3-phospho-(1'-sn-glycerol) + H2O = 1-hexadecanoyl-sn-glycero-3-phospho-(1'-sn-glycerol) + hexadecanoate + H(+). The enzyme catalyses 1-hexadecanoyl-2-(9Z-octadecenoyl)-sn-glycero-3-phospho-L-serine + H2O = 1-hexadecanoyl-sn-glycero-3-phospho-L-serine + (9Z)-octadecenoate + H(+). It catalyses the reaction 1-hexadecanoyl-2-(9Z,12Z-octadecadienoyl)-sn-glycero-3-phosphoethanolamine + H2O = 1-hexadecanoyl-sn-glycero-3-phosphoethanolamine + (9Z,12Z)-octadecadienoate + H(+). The catalysed reaction is 1-hexadecanoyl-2-(9Z-octadecenoyl)-sn-glycero-3-phosphate + H2O = 1-hexadecanoyl-sn-glycero-3-phosphate + (9Z)-octadecenoate + H(+). It carries out the reaction 1-O-hexadecyl-2-acetyl-sn-glycero-3-phosphocholine + H2O = 1-O-hexadecyl-sn-glycero-3-phosphocholine + acetate + H(+). Functionally, secretory calcium-dependent phospholipase A2 that primarily targets extracellular phospholipids. Hydrolyzes the ester bond of the fatty acyl group attached at sn-2 position of phospholipids with preference for phosphatidylcholines and phosphatidylglycerols over phosphatidylethanolamines. Preferentially releases sn-2 omega-6 and omega-3 polyunsaturated fatty acyl (PUFA) chains over saturated fatty acyls. Contributes to phospholipid remodeling of very low-density lipoprotein (VLDL), low-density lipoprotein (LDL) and high-density lipoprotein (HDL) particles. Hydrolyzes LDL phospholipids releasing unsaturated fatty acids that regulate macrophage differentiation toward foam cells. Efficiently hydrolyzes and inactivates PAF, a potent lipid mediator present in oxidized LDL. May act in an autocrine and paracrine manner. Secreted by lung epithelium, targets membrane phospholipids of infiltrating eosinophils, releasing arachidonate and boosting eicosanoid and cysteinyl leukotriene synthesis involved in airway inflammatory response. Secreted by gut epithelium, hydrolyzes dietary and biliary phosphatidylcholines in the gastrointestinal lumen, thereby regulating adipogenesis and body weight. Plays a stem cell regulator role in colon epithelium. Within intracellular compartment, mediates Paneth-like cell differentiation and its stem cell supporting functions by inhibiting Wnt signaling pathway in intestinal stem cell (ISC). Secreted in the intestinal lumen upon inflammation, acts in an autocrine way and promotes prostaglandin E2 synthesis that stimulates the Wnt signaling pathway in ISCs and tissue regeneration. May participate in hair follicle morphogenesis by regulating phosphatidylethanolamines metabolism at the outermost epithelial layer and facilitating melanin synthesis. By generating lysophosphatidylcholines (LPCs) at sperm acrosome controls sperm cell capacitation, acrosome reaction and overall fertility. May promote neurite outgrowth in neuron fibers involved in nociception. Contributes to lipid remodeling of cellular membranes and generation of lipid mediators involved in pathogen clearance. Cleaves sn-2 fatty acyl chains of phosphatidylglycerols and phosphatidylethanolamines, which are major components of membrane phospholipids in bacteria. Displays bactericidal activity against Gram-positive bacteria by directly hydrolyzing phospholipids of the bacterial membrane. In pulmonary epithelium, may contribute to host defense response against adenoviral infection. Prevents adenovirus entry into host cells by hydrolyzing host cell plasma membrane, releasing C16:0 LPCs that inhibit virus-mediated membrane fusion and viral infection. Likely prevents adenoviral entry into the endosomes of host cells. May play a role in maturation and activation of innate immune cells including macrophages, group 2 innate lymphoid cells and mast cells. This Mus musculus (Mouse) protein is Group 10 secretory phospholipase A2 (Pla2g10).